A 370-amino-acid polypeptide reads, in one-letter code: tRNA-specific 2-thiouridylase MnmA (370 aa).

ATP-binding positions include 12-19 (GMSGGVDS) and Leu-38. The Nucleophile role is filled by Cys-105. Residues Cys-105 and Cys-204 are joined by a disulfide bond. Residue Gly-129 coordinates ATP. Residues 153–155 (KDQ) are interaction with tRNA. The Cysteine persulfide intermediate role is filled by Cys-204. The tract at residues 310–311 (RY) is interaction with tRNA.

Belongs to the MnmA/TRMU family.

It is found in the cytoplasm. The enzyme catalyses S-sulfanyl-L-cysteinyl-[protein] + uridine(34) in tRNA + AH2 + ATP = 2-thiouridine(34) in tRNA + L-cysteinyl-[protein] + A + AMP + diphosphate + H(+). Its function is as follows. Catalyzes the 2-thiolation of uridine at the wobble position (U34) of tRNA, leading to the formation of s(2)U34. The protein is tRNA-specific 2-thiouridylase MnmA of Desulfitobacterium hafniense (strain Y51).